The chain runs to 259 residues: DnaJ homolog subfamily C member 9 (259 aa).

The J domain occupies 15-82; it reads DLYQVLGVRR…EQKAVYDEQG (68 aa). Phosphoserine is present on S109. The segment at 171 to 248 is required for histone binding; the sequence is EIPAYSAFVK…EAKYCKPSKG (78 aa).

Forms a co-chaperone complex with MCM2 and histone H3.3-H4 dimers. Within the complex, interacts (via C-terminus) with MCM2 (via N-terminus); the interaction is histone-dependent. Within the complex, interacts (via C-terminus) with histone H3.3-H4 heterodimers; the interaction is direct. Interacts with histones H4, H3.3, H3.2 and H3.1, but not with CENPA or the testis-specific histone H3.1t. Interacts (via J domain) with HSPA1A, HSPA1B and HSPA8. May interact with TONSL; the interaction seems to be histone-dependent. May interact with HSPA8 and BAG2; the interactions seem to be histone-dependent.

It is found in the nucleus. The protein resides in the cytoplasm. It localises to the cell membrane. Acts as a dual histone chaperone and heat shock co-chaperone. As a histone chaperone, forms a co-chaperone complex with MCM2 and histone H3-H4 heterodimers; and may thereby assist MCM2 in histone H3-H4 heterodimer recognition and facilitate the assembly of histones into nucleosomes. May also act as a histone co-chaperone together with TONSL. May recruit histone chaperones ASF1A, NASP and SPT2 to histone H3-H4 heterodimers. Also plays a role as co-chaperone of the HSP70 family of molecular chaperone proteins, such as HSPA1A, HSPA1B and HSPA8. As a co-chaperone, may play a role in the recruitment of HSP70-type molecular chaperone machinery to histone H3-H4 substrates, thereby maintaining the histone structural integrity. Exhibits activity to assemble histones onto DNA in vitro. The protein is DnaJ homolog subfamily C member 9 (Dnajc9) of Mus musculus (Mouse).